A 307-amino-acid chain; its full sequence is Recombination-associated protein RdgC (307 aa).

The protein belongs to the RdgC family.

The protein localises to the cytoplasm. It localises to the nucleoid. Its function is as follows. May be involved in recombination. The protein is Recombination-associated protein RdgC of Burkholderia cenocepacia (strain ATCC BAA-245 / DSM 16553 / LMG 16656 / NCTC 13227 / J2315 / CF5610) (Burkholderia cepacia (strain J2315)).